A 58-amino-acid chain; its full sequence is MSEVRVKENESLDSALKRFKRSCAKSGVLAEVRKREHYEKPSVKRKKKSEAARKRKFK.

The disordered stretch occupies residues 35–58 (REHYEKPSVKRKKKSEAARKRKFK). A compositionally biased stretch (basic residues) spans 43–58 (VKRKKKSEAARKRKFK).

The protein belongs to the bacterial ribosomal protein bS21 family.

The polypeptide is Small ribosomal subunit protein bS21 (Ruminiclostridium cellulolyticum (strain ATCC 35319 / DSM 5812 / JCM 6584 / H10) (Clostridium cellulolyticum)).